Consider the following 104-residue polypeptide: uncharacterized protein (104 aa).

A helical membrane pass occupies residues 80–98; it reads GSSLPLFDLVFILLSTFFL.

Its subcellular location is the membrane. This is an uncharacterized protein from Saccharomyces cerevisiae (strain ATCC 204508 / S288c) (Baker's yeast).